A 299-amino-acid chain; its full sequence is Xyloglucan endotransglucosylase protein 6 (299 aa).

The signal sequence occupies residues 1–25 (MASSLTLPMAMAFTLLALSFASAMG). The region spanning 26–219 (GSMNSSRFDE…WSHAPFVASY (194 aa)) is the GH16 domain. Residue glutamate 105 is the Nucleophile of the active site. Residue glutamate 109 is the Proton donor of the active site. Glutamate 109 contacts xyloglucan. Asparagine 113 carries N-linked (GlcNAc...) asparagine glycosylation. Residues 122-124 (QTN), 132-134 (NRE), 198-199 (DW), and glycine 203 contribute to the xyloglucan site. 2 disulfides stabilise this stretch: cysteine 227–cysteine 242 and cysteine 281–cysteine 294. Residue arginine 286 coordinates xyloglucan.

Belongs to the glycosyl hydrolase 16 family. XTH group 1 subfamily. Contains at least one intrachain disulfide bond essential for its enzymatic activity. Highest expression in ripe leaves after full expansion. Also expressed in fruits, and at a lower level in flowers and stems (picked at anthesis).

Its subcellular location is the secreted. It is found in the cell wall. The protein localises to the extracellular space. It localises to the apoplast. It catalyses the reaction breaks a beta-(1-&gt;4) bond in the backbone of a xyloglucan and transfers the xyloglucanyl segment on to O-4 of the non-reducing terminal glucose residue of an acceptor, which can be a xyloglucan or an oligosaccharide of xyloglucan.. In terms of biological role, catalyzes xyloglucan endotransglycosylation (XET). Cleaves and religates xyloglucan polymers. Does not catalyze xyloglucan endohydrolysis (XEH). Probably involved in cell wall restructuring during postharvest fruit softening. The protein is Xyloglucan endotransglucosylase protein 6 of Diospyros kaki (Kaki persimmon).